A 484-amino-acid chain; its full sequence is Probable sphingolipid transporter spinster homolog 2 (484 aa).

A disordered region spans residues 1–23 (MDVDGEGDRGQNPRIMERDSDSI). A helical transmembrane segment spans residues 38–58 (LLFVFCVVNLINYIDRGAIAS). Asn62 and Asn85 each carry an N-linked (GlcNAc...) asparagine glycan. A run of 11 helical transmembrane segments spans residues 93-113 (VLSS…ASLA), 122-142 (IGVG…SFDF), 147-167 (ICRM…APFI), 181-201 (AVFY…GGVV), 209-229 (AAFW…FVIK), 273-293 (VYVT…AYSY), 311-331 (IFGG…GVIL), 345-362 (LSVS…AFCF), 377-397 (LLVF…VKPS), 405-425 (MSTV…VGVL), and 436-456 (SLVL…GIFL). Phosphoserine is present on Ser466.

The protein belongs to the major facilitator superfamily. Spinster (TC 2.A.1.49) family.

The protein resides in the late endosome membrane. Its subcellular location is the lysosome membrane. Its function is as follows. Probable sphingolipid transporter that plays a central role in endosomes and/or lysosomes storage. This is Probable sphingolipid transporter spinster homolog 2 from Arabidopsis thaliana (Mouse-ear cress).